Here is a 138-residue protein sequence, read N- to C-terminus: Venom allergen 2 (138 aa).

The N-terminal stretch at 1–19 is a signal peptide; it reads MKSFVLATCLLGFAQIIYA. Cystine bridges form between Cys34–Cys57, Cys81–Cys94, and Cys101–Cys122.

The protein belongs to the ant venom allergen 2/4 family. In terms of assembly, homodimer; disulfide-linked. As to expression, expressed by the venom gland.

The protein resides in the secreted. The sequence is that of Venom allergen 2 from Solenopsis invicta (Red imported fire ant).